A 556-amino-acid chain; its full sequence is MARTTSQLYDAVPIQSSVVLCSCPSPSMVRTQTESSTPPGIPGGSRQGPAMDGTAAEPRPGAGSLQHAQPPPQPRKKRPEDFKFGKILGEGSFSTVVLARELATSREYAIKILEKRHIIKENKVPYVTRERDVMSRLDHPFFVKLYFTFQDDEKLYFGLSYAKNGELLKYIRKIGSFDETCTRFYTAEIVSALEYLHGKGIIHRDLKPENILLNEDMHIQITDFGTAKVLSPESKQARANSFVGTAQYVSPELLTEKSACKSSDLWALGCIIYQLVAGLPPFRAGNEYLIFQKIIKLEYDFPEKFFPKARDLVEKLLVLDATKRLGCEEMEGYGPLKAHPFFESVTWENLHQQTPPKLTAYLPAMSEDDEDCYGNYDNLLSQFGCMQVSSSSSSHSLSASDTGLPQRSGSNIEQYIHDLDSNSFELDLQFSEDEKRLLLEKQAGGNPWHQFVENNLILKMGPVDKRKGLFARRRQLLLTEGPHLYYVDPVNKVLKGEIPWSQELRPEAKNFKTFFVHTPNRTYYLMDPSGNAHKWCRKIQEVWRQRYQSHPDAAVQ.

Tyr9 carries the post-translational modification Phosphotyrosine; by SRC and INSR. Position 25 is a phosphoserine (Ser25). The tract at residues 26–80 (PSMVRTQTESSTPPGIPGGSRQGPAMDGTAAEPRPGAGSLQHAQPPPQPRKKRPE) is disordered. Residues 28–38 (MVRTQTESSTP) show a composition bias toward polar residues. Residues 82-342 (FKFGKILGEG…YGPLKAHPFF (261 aa)) form the Protein kinase domain. Residues 92-94 (SFS) and Lys111 contribute to the ATP site. The tract at residues 113-157 (LEKRHIIKENKVPYVTRERDVMSRLDHPFFVKLYFTFQDDEKLYF) is PIF-pocket. ATP contacts are provided by residues 160 to 162 (SYA) and Glu166. The active-site Proton acceptor is the Asp205. ATP-binding residues include Glu209 and Asp223. At Ser241 the chain carries Phosphoserine; by autocatalysis. The residue at position 304 (Lys304) is an N6-acetyllysine. Position 354 is a phosphothreonine; by MELK (Thr354). A phosphotyrosine; by SRC and INSR mark is found at Tyr373 and Tyr376. Ser393 is modified (phosphoserine). Ser394 carries the phosphoserine; by MAP3K5 modification. Ser396 bears the Phosphoserine mark. Position 398 is a phosphoserine; by MAP3K5 (Ser398). A Phosphoserine modification is found at Ser410. The region spanning 459–550 (KMGPVDKRKG…EVWRQRYQSH (92 aa)) is the PH domain. Ser501 is modified (phosphoserine; by PKC/PRKCQ). Residue Thr513 is modified to Phosphothreonine; by autocatalysis. A Phosphoserine; by PKC/PRKCQ modification is found at Ser529.

It belongs to the protein kinase superfamily. AGC Ser/Thr protein kinase family. PDPK1 subfamily. In terms of assembly, homodimer in its autoinhibited state. Active as monomer. Interacts with NPRL2, PPARG, PAK1, PTK2B, GRB14, PKN1 (via C-terminus), STRAP and IKKB. The Tyr-9 phosphorylated form interacts with SRC, RASA1 and CRK (via their SH2 domains). Interacts with SGK3 in a phosphorylation-dependent manner. The tyrosine-phosphorylated form interacts with PTPN6. The Ser-241 phosphorylated form interacts with YWHAH and YWHAQ. Binds INSR in response to insulin. Interacts (via PH domain) with SMAD3, SMAD4 and SMAD7. Interacts with PKN2; the interaction stimulates PDPK1 autophosphorylation, its PI(3,4,5)P3-dependent kinase activity toward 'Ser-473' of AKT1 but also activates its kinase activity toward PRKCD and PRKCZ. Post-translationally, phosphorylation on Ser-241 in the activation loop is required for full activity. PDPK1 itself can autophosphorylate Ser-241, leading to its own activation. Autophosphorylation is inhibited by the apoptotic C-terminus cleavage product of PKN2. Tyr-9 phosphorylation is critical for stabilization of both PDPK1 and the PDPK1/SRC complex via HSP90-mediated protection of PDPK1 degradation. Angiotensin II stimulates the tyrosine phosphorylation of PDPK1 in vascular smooth muscle in a calcium- and SRC-dependent manner. Phosphorylated on Tyr-9, Tyr-373 and Tyr-376 by INSR in response to insulin. Palmitate negatively regulates autophosphorylation at Ser-241 and palmitate-induced phosphorylation at Ser-529 and Ser-501 by PKC/PRKCQ negatively regulates its ability to phosphorylate PKB/AKT1. Phosphorylation at Thr-354 by MELK partially inhibits kinase activity, the inhibition is cooperatively enhanced by phosphorylation at Ser-394 and Ser-398 by MAP3K5. In terms of processing, autophosphorylated; autophosphorylation is inhibited by the apoptotic C-terminus cleavage product of PKN2. Monoubiquitinated in the kinase domain, deubiquitinated by USP4. As to expression, appears to be expressed ubiquitously. The Tyr-9 phosphorylated form is markedly increased in diseased tissue compared with normal tissue from lung, liver, colon and breast.

It localises to the cytoplasm. The protein localises to the nucleus. Its subcellular location is the cell membrane. It is found in the cell junction. The protein resides in the focal adhesion. The catalysed reaction is L-seryl-[protein] + ATP = O-phospho-L-seryl-[protein] + ADP + H(+). The enzyme catalyses L-threonyl-[protein] + ATP = O-phospho-L-threonyl-[protein] + ADP + H(+). With respect to regulation, homodimerization regulates its activity by maintaining the kinase in an autoinhibitory conformation. NPRL2 down-regulates its activity by interfering with tyrosine phosphorylation at the Tyr-9, Tyr-373 and Tyr-376 residues. The 14-3-3 protein YWHAQ acts as a negative regulator by association with the residues surrounding the Ser-241 residue. STRAP positively regulates its activity by enhancing its autophosphorylation and by stimulating its dissociation from YWHAQ. SMAD2, SMAD3, SMAD4 and SMAD7 also positively regulate its activity by stimulating its dissociation from YWHAQ. Activated by phosphorylation on Tyr-9, Tyr-373 and Tyr-376 by INSR in response to insulin. In terms of biological role, serine/threonine kinase which acts as a master kinase, phosphorylating and activating a subgroup of the AGC family of protein kinases. Its targets include: protein kinase B (PKB/AKT1, PKB/AKT2, PKB/AKT3), p70 ribosomal protein S6 kinase (RPS6KB1), p90 ribosomal protein S6 kinase (RPS6KA1, RPS6KA2 and RPS6KA3), cyclic AMP-dependent protein kinase (PRKACA), protein kinase C (PRKCD and PRKCZ), serum and glucocorticoid-inducible kinase (SGK1, SGK2 and SGK3), p21-activated kinase-1 (PAK1), TSSK3, protein kinase PKN (PKN1 and PKN2). Plays a central role in the transduction of signals from insulin by providing the activating phosphorylation to PKB/AKT1, thus propagating the signal to downstream targets controlling cell proliferation and survival, as well as glucose and amino acid uptake and storage. Negatively regulates the TGF-beta-induced signaling by: modulating the association of SMAD3 and SMAD7 with TGF-beta receptor, phosphorylating SMAD2, SMAD3, SMAD4 and SMAD7, preventing the nuclear translocation of SMAD3 and SMAD4 and the translocation of SMAD7 from the nucleus to the cytoplasm in response to TGF-beta. Activates PPARG transcriptional activity and promotes adipocyte differentiation. Activates the NF-kappa-B pathway via phosphorylation of IKKB. The tyrosine phosphorylated form is crucial for the regulation of focal adhesions by angiotensin II. Controls proliferation, survival, and growth of developing pancreatic cells. Participates in the regulation of Ca(2+) entry and Ca(2+)-activated K(+) channels of mast cells. Essential for the motility of vascular endothelial cells (ECs) and is involved in the regulation of their chemotaxis. Plays a critical role in cardiac homeostasis by serving as a dual effector for cell survival and beta-adrenergic response. Plays an important role during thymocyte development by regulating the expression of key nutrient receptors on the surface of pre-T cells and mediating Notch-induced cell growth and proliferative responses. Provides negative feedback inhibition to toll-like receptor-mediated NF-kappa-B activation in macrophages. Catalytically inactive. In Homo sapiens (Human), this protein is 3-phosphoinositide-dependent protein kinase 1 (PDPK1).